The chain runs to 286 residues: Flagellin FlaB2 (286 aa).

The protein belongs to the bacterial flagellin family. In terms of assembly, the flagellum consists of an outer layer composed of repeating units of FlaA around a core that contains several antigenically related polypeptides. Interacts with FliW; a synthetic peptide of FlaB1 (residues 229-247) partially blocks binding of this protein to FliW.

It is found in the periplasmic flagellum. The protein localises to the periplasm. In terms of biological role, component of the core of the flagella. This is Flagellin FlaB2 from Treponema pallidum (strain Nichols).